The sequence spans 275 residues: Pantothenate synthetase (275 aa).

26-33 (MGFLHEGH) contributes to the ATP binding site. The active-site Proton donor is His33. Gln57 is a binding site for (R)-pantoate. Gln57 is a binding site for beta-alanine. 143–146 (GQKD) serves as a coordination point for ATP. Gln149 contributes to the (R)-pantoate binding site. ATP contacts are provided by residues Ala172 and 180–183 (RSSR).

The protein belongs to the pantothenate synthetase family. In terms of assembly, homodimer.

It is found in the cytoplasm. It catalyses the reaction (R)-pantoate + beta-alanine + ATP = (R)-pantothenate + AMP + diphosphate + H(+). It participates in cofactor biosynthesis; (R)-pantothenate biosynthesis; (R)-pantothenate from (R)-pantoate and beta-alanine: step 1/1. Functionally, catalyzes the condensation of pantoate with beta-alanine in an ATP-dependent reaction via a pantoyl-adenylate intermediate. In Gluconobacter oxydans (strain 621H) (Gluconobacter suboxydans), this protein is Pantothenate synthetase.